A 419-amino-acid chain; its full sequence is Squalene synthase R6 (419 aa).

The helical transmembrane segment at 397 to 417 threads the bilayer; the sequence is TMYLVVLLLGILGVAAAVLMA.

It belongs to the phytoene/squalene synthase family. It depends on Mg(2+) as a cofactor.

The protein resides in the membrane. The catalysed reaction is 2 (2E,6E)-farnesyl diphosphate + NADPH + H(+) = squalene + 2 diphosphate + NADP(+). It catalyses the reaction 2 (2E,6E)-farnesyl diphosphate + NADH + H(+) = squalene + 2 diphosphate + NAD(+). The protein operates within terpene metabolism; lanosterol biosynthesis; lanosterol from farnesyl diphosphate: step 1/3. Functionally, squalene synthase; part of the gene cluster that mediates the biosynthesis of squalestatin S1 (SQS1, also known as zaragozic acid A), a heavily oxidized fungal polyketide that offers potent cholesterol lowering activity by targeting squalene synthase (SS). Catalyzes the condensation of 2 two farnesyl pyrophosphate moieties to form squalene. The presence of a gene encoding a squalene synthase supports the identification of the cluster as being responsible for SQS1 production and suggests a likely mechanism for self-resistance. The polypeptide is Squalene synthase R6 (Phoma sp. (strain ATCC 20986 / MF5453)).